Reading from the N-terminus, the 199-residue chain is Urease accessory protein UreG (199 aa).

8-15 (GPVGSGKT) provides a ligand contact to GTP.

This sequence belongs to the SIMIBI class G3E GTPase family. UreG subfamily. In terms of assembly, homodimer. UreH, UreF and UreG form a complex that acts as a GTP-hydrolysis-dependent molecular chaperone, activating the urease apoprotein by helping to assemble the nickel containing metallocenter of UreC. The UreE protein probably delivers the nickel.

Its subcellular location is the cytoplasm. In terms of biological role, facilitates the functional incorporation of the urease nickel metallocenter. This process requires GTP hydrolysis, probably effectuated by UreG. The chain is Urease accessory protein UreG from Helicobacter pylori (strain G27).